Here is a 417-residue protein sequence, read N- to C-terminus: Putative F-box protein At3g58950 (417 aa).

Residues 1–53 form the F-box domain; sequence MDLFSSLPDEVLCHILSFLTTKEAALASVVSKRWRNQFALVPNLDIDEEGKRE.

The protein is Putative F-box protein At3g58950 of Arabidopsis thaliana (Mouse-ear cress).